Here is a 74-residue protein sequence, read N- to C-terminus: Tetrahydromethanopterin S-methyltransferase subunit G (74 aa).

Residues 50-70 (IGILYGLVIGLYLCMLYILLG) traverse the membrane as a helical segment.

This sequence belongs to the MtrG family. As to quaternary structure, the complex is composed of 8 subunits; MtrA, MtrB, MtrC, MtrD, MtrE, MtrF, MtrG and MtrH.

The protein localises to the cell membrane. It catalyses the reaction 5-methyl-5,6,7,8-tetrahydromethanopterin + coenzyme M + 2 Na(+)(in) = 5,6,7,8-tetrahydromethanopterin + methyl-coenzyme M + 2 Na(+)(out). It functions in the pathway one-carbon metabolism; methanogenesis from CO(2); methyl-coenzyme M from 5,10-methylene-5,6,7,8-tetrahydromethanopterin: step 2/2. Its function is as follows. Part of a complex that catalyzes the formation of methyl-coenzyme M and tetrahydromethanopterin from coenzyme M and methyl-tetrahydromethanopterin. This is an energy-conserving, sodium-ion translocating step. The sequence is that of Tetrahydromethanopterin S-methyltransferase subunit G from Methanopyrus kandleri (strain AV19 / DSM 6324 / JCM 9639 / NBRC 100938).